The primary structure comprises 339 residues: Phosphate acyltransferase (339 aa).

This sequence belongs to the PlsX family. In terms of assembly, homodimer. Probably interacts with PlsY.

The protein resides in the cytoplasm. The catalysed reaction is a fatty acyl-[ACP] + phosphate = an acyl phosphate + holo-[ACP]. The protein operates within lipid metabolism; phospholipid metabolism. Its function is as follows. Catalyzes the reversible formation of acyl-phosphate (acyl-PO(4)) from acyl-[acyl-carrier-protein] (acyl-ACP). This enzyme utilizes acyl-ACP as fatty acyl donor, but not acyl-CoA. The polypeptide is Phosphate acyltransferase (Clostridium perfringens (strain ATCC 13124 / DSM 756 / JCM 1290 / NCIMB 6125 / NCTC 8237 / Type A)).